We begin with the raw amino-acid sequence, 289 residues long: Glycine--tRNA ligase alpha subunit (289 aa).

It belongs to the class-II aminoacyl-tRNA synthetase family. Tetramer of two alpha and two beta subunits.

It localises to the cytoplasm. The catalysed reaction is tRNA(Gly) + glycine + ATP = glycyl-tRNA(Gly) + AMP + diphosphate. The chain is Glycine--tRNA ligase alpha subunit from Rickettsia typhi (strain ATCC VR-144 / Wilmington).